A 550-amino-acid chain; its full sequence is Glypican-1 (550 aa).

An N-terminal signal peptide occupies residues 1–20 (MRFFPWGFWLLCVASAPARG). Cystine bridges form between Cys-29/Cys-65, Cys-59/Cys-253, Cys-66/Cys-256, Cys-188/Cys-340, Cys-243/Cys-276, Cys-265/Cys-412, and Cys-269/Cys-398. Residues Asn-76 and Asn-113 are each glycosylated (N-linked (GlcNAc...) asparagine). Asn-382 carries N-linked (GlcNAc...) asparagine glycosylation. 2 disordered regions span residues 475-494 (FQDASDDMSGSGSGDSCPDD) and 502-522 (KSPSTRQPETHAIPKQSGHGV). Over residues 481–494 (DMSGSGSGDSCPDD) the composition is skewed to low complexity. 3 O-linked (Xyl...) (heparan sulfate) serine glycosylation sites follow: Ser-483, Ser-485, and Ser-487. Gly-524 carries GPI-anchor amidated glycine lipidation. Positions 525–550 (ASSRSLPSAFLLFLSGASIVVQHLWR) are cleaved as a propeptide — removed in mature form.

The protein belongs to the glypican family. O-glycosylated with heparan sulfate.

Its subcellular location is the cell membrane. It is found in the endosome. The protein localises to the secreted. The protein resides in the extracellular space. Its function is as follows. Cell surface proteoglycan that bears heparan sulfate. Modulates Wnt-signaling pathway. The sequence is that of Glypican-1 (GPC1) from Gallus gallus (Chicken).